The chain runs to 431 residues: Enolase (431 aa).

Position 166 (Q166) interacts with (2R)-2-phosphoglycerate. E208 (proton donor) is an active-site residue. Residues D245, E288, and D315 each coordinate Mg(2+). Residues K340, R369, S370, and K391 each contribute to the (2R)-2-phosphoglycerate site. The active-site Proton acceptor is K340.

It belongs to the enolase family. Mg(2+) is required as a cofactor.

The protein localises to the cytoplasm. It is found in the secreted. Its subcellular location is the cell surface. It carries out the reaction (2R)-2-phosphoglycerate = phosphoenolpyruvate + H2O. The protein operates within carbohydrate degradation; glycolysis; pyruvate from D-glyceraldehyde 3-phosphate: step 4/5. Its function is as follows. Catalyzes the reversible conversion of 2-phosphoglycerate (2-PG) into phosphoenolpyruvate (PEP). It is essential for the degradation of carbohydrates via glycolysis. The protein is Enolase of Clostridium botulinum (strain ATCC 19397 / Type A).